A 513-amino-acid polypeptide reads, in one-letter code: Maturase K (513 aa).

It belongs to the intron maturase 2 family. MatK subfamily.

Its subcellular location is the plastid. It localises to the chloroplast. In terms of biological role, usually encoded in the trnK tRNA gene intron. Probably assists in splicing its own and other chloroplast group II introns. This Saccharum officinarum (Sugarcane) protein is Maturase K.